Reading from the N-terminus, the 609-residue chain is Albumin (609 aa).

An N-terminal signal peptide occupies residues 1-18; that stretch reads MKWVTFISLLFLFSSAYS. A propeptide spanning residues 19 to 24 is cleaved from the precursor; it reads RGVFRR. Albumin domains are found at residues 19–210, 211–403, and 404–601; these read RGVF…DELR, DEGK…EFKP, and LVEE…KLVA. His27 is a binding site for Cu cation. Phosphoserine; by FAM20C is present on Ser29. A Ca(2+)-binding site is contributed by Glu30. N-linked (Glc) (glycation) lysine glycosylation is present at Lys36. Asp37 is a binding site for Ca(2+). A glycan (N-linked (Glc) (glycation) lysine; in vitro) is linked at Lys75. A disulfide bond links Cys77 and Cys86. Residues Ser82 and Ser89 each carry the phosphoserine; by FAM20C modification. His91 is a binding site for Zn(2+). 4 disulfides stabilise this stretch: Cys99–Cys115, Cys114–Cys125, Cys148–Cys193, and Cys192–Cys201. Thr107 bears the Phosphothreonine; by FAM20C mark. N-linked (Glc) (glycation) lysine; in vitro glycans are attached at residues Lys161 and Lys186. Lys223 carries N-linked (Glc) (glycation) lysine; in vitro glycosylation. 2 disulfide bridges follow: Cys224–Cys270 and Cys269–Cys277. Position 229 is an N6-succinyllysine (Lys229). N-linked (Glc) (glycation) lysine; in vitro glycosylation occurs at Lys249. Lys257 carries an N-linked (Glc) (glycation) lysine glycan. Lys264 serves as a coordination point for (4Z,15Z)-bilirubin IXalpha. Glu268 provides a ligand contact to Ca(2+). Residues His271 and Asp273 each coordinate Zn(2+). The Ca(2+) site is built by Asp273, Glu276, Asp279, and Asp283. 2 cysteine pairs are disulfide-bonded: Cys289–Cys303 and Cys302–Cys313. At Ser297 the chain carries Phosphoserine. The N-linked (Glc) (glycation) lysine; in vitro glycan is linked to Lys300. N-linked (Glc) (glycation) lysine glycosylation is present at Lys305. The N-linked (Glc) (glycation) lysine; in vitro glycan is linked to Lys337. 2 cysteine pairs are disulfide-bonded: Cys340–Cys385 and Cys384–Cys393. Lys341 carries an N-linked (Glc) (glycation) lysine glycan. Asn342 carries an N-linked (GlcNAc...) asparagine; in variant Redhill glycan. The N-linked (Glc) (glycation) lysine; in vitro glycan is linked to Lys347. Lys375 is a glycosylation site (N-linked (Glc) (glycation) lysine). 2 N-linked (Glc) (glycation) lysine; in vitro glycosylation sites follow: Lys402 and Lys437. Intrachain disulfides connect Cys416-Cys462, Cys461-Cys472, Cys485-Cys501, and Cys500-Cys511. At Ser443 the chain carries Phosphoserine. Phosphothreonine occurs at positions 444 and 446. Lys460 carries the post-translational modification N6-succinyllysine. An N-linked (Glc) (glycation) lysine glycan is attached at Lys463. Lys468 carries an N-linked (Glc) (glycation) lysine; in vitro glycan. Ser513 bears the Phosphoserine mark. N-linked (GlcNAc...) asparagine; in variant Casebrook glycosylation occurs at Asp518. Cystine bridges form between Cys538-Cys583 and Cys582-Cys591. Lys543 bears the N6-succinyllysine mark. An N-linked (Glc) (glycation) lysine glycan is attached at Lys549. Lys558 carries the N6-methyllysine; alternate modification. Lys558 carries an N-linked (Glc) (glycation) lysine; alternate glycan. 2 N-linked (Glc) (glycation) lysine; in vitro glycosylation sites follow: Lys560 and Lys569. Residue Lys588 is modified to N6-succinyllysine. Lys597 is a glycosylation site (N-linked (Glc) (glycation) lysine; in vitro).

It belongs to the ALB/AFP/VDB family. Interacts with FCGRT; this interaction regulates ALB homeostasis. Interacts with TASOR. In plasma, occurs in a covalently-linked complex with chromophore-bound alpha-1-microglobulin with molar ratio 1:2 and 1:1; this interaction does not prevent fatty acid binding to ALB. Post-translationally, kenitra variant is partially O-glycosylated at Thr-620. It has two new disulfide bonds Cys-600 to Cys-602 and Cys-601 to Cys-606. Glycated in diabetic patients. In terms of processing, phosphorylated by FAM20C in the extracellular medium. Post-translationally, acetylated on Lys-223 by acetylsalicylic acid. In terms of tissue distribution, plasma.

It is found in the secreted. Binds water, Ca(2+), Na(+), K(+), fatty acids, hormones, bilirubin and drugs. Its main function is the regulation of the colloidal osmotic pressure of blood. Major zinc transporter in plasma, typically binds about 80% of all plasma zinc. Major calcium and magnesium transporter in plasma, binds approximately 45% of circulating calcium and magnesium in plasma. Potentially has more than two calcium-binding sites and might additionally bind calcium in a non-specific manner. The shared binding site between zinc and calcium at residue Asp-273 suggests a crosstalk between zinc and calcium transport in the blood. The rank order of affinity is zinc &gt; calcium &gt; magnesium. Binds to the bacterial siderophore enterobactin and inhibits enterobactin-mediated iron uptake of E.coli from ferric transferrin, and may thereby limit the utilization of iron and growth of enteric bacteria such as E.coli. Does not prevent iron uptake by the bacterial siderophore aerobactin. The polypeptide is Albumin (ALB) (Homo sapiens (Human)).